Here is a 629-residue protein sequence, read N- to C-terminus: tRNA uridine 5-carboxymethylaminomethyl modification enzyme MnmG (629 aa).

FAD-binding positions include 13 to 18 (GGGHAG), Val-125, and Ser-180. An NAD(+)-binding site is contributed by 273–287 (GPRYCPSIEDKVMRF). Gln-370 contributes to the FAD binding site.

This sequence belongs to the MnmG family. As to quaternary structure, homodimer. Heterotetramer of two MnmE and two MnmG subunits. FAD serves as cofactor.

The protein localises to the cytoplasm. Its function is as follows. NAD-binding protein involved in the addition of a carboxymethylaminomethyl (cmnm) group at the wobble position (U34) of certain tRNAs, forming tRNA-cmnm(5)s(2)U34. This is tRNA uridine 5-carboxymethylaminomethyl modification enzyme MnmG from Pasteurella multocida (strain Pm70).